We begin with the raw amino-acid sequence, 100 residues long: Small ribosomal subunit protein uS14c (100 aa).

It belongs to the universal ribosomal protein uS14 family. As to quaternary structure, part of the 30S ribosomal subunit.

It is found in the plastid. Its function is as follows. Binds 16S rRNA, required for the assembly of 30S particles. In Euglena longa (Euglenophycean alga), this protein is Small ribosomal subunit protein uS14c.